A 367-amino-acid chain; its full sequence is Heme A synthase (367 aa).

8 consecutive transmembrane segments (helical) span residues 26-46, 111-131, 139-159, 174-194, 212-232, 272-292, 305-325, and 327-347; these read IRGW…VGGA, LLAR…WVTG, LPLL…WWMV, LATH…IYRG, AAVI…VAGL, FVHR…MIAA, SVLL…TLLL, and VPIG…GFAI. His274 contributes to the heme binding site. His335 provides a ligand contact to heme.

Belongs to the COX15/CtaA family. Type 2 subfamily. As to quaternary structure, interacts with CtaB. Heme b is required as a cofactor.

The protein resides in the cell membrane. It carries out the reaction Fe(II)-heme o + 2 A + H2O = Fe(II)-heme a + 2 AH2. The protein operates within porphyrin-containing compound metabolism; heme A biosynthesis; heme A from heme O: step 1/1. In terms of biological role, catalyzes the conversion of heme O to heme A by two successive hydroxylations of the methyl group at C8. The first hydroxylation forms heme I, the second hydroxylation results in an unstable dihydroxymethyl group, which spontaneously dehydrates, resulting in the formyl group of heme A. The protein is Heme A synthase of Sinorhizobium medicae (strain WSM419) (Ensifer medicae).